We begin with the raw amino-acid sequence, 159 residues long: 2-C-methyl-D-erythritol 2,4-cyclodiphosphate synthase (159 aa).

A divalent metal cation-binding residues include D10 and H12. 4-CDP-2-C-methyl-D-erythritol 2-phosphate contacts are provided by residues 10–12 (DVH) and 36–37 (HS). H44 is an a divalent metal cation binding site. Residues 58 to 60 (DIG) and R144 contribute to the 4-CDP-2-C-methyl-D-erythritol 2-phosphate site.

This sequence belongs to the IspF family. Homotrimer. Requires a divalent metal cation as cofactor.

It carries out the reaction 4-CDP-2-C-methyl-D-erythritol 2-phosphate = 2-C-methyl-D-erythritol 2,4-cyclic diphosphate + CMP. It participates in isoprenoid biosynthesis; isopentenyl diphosphate biosynthesis via DXP pathway; isopentenyl diphosphate from 1-deoxy-D-xylulose 5-phosphate: step 4/6. In terms of biological role, involved in the biosynthesis of isopentenyl diphosphate (IPP) and dimethylallyl diphosphate (DMAPP), two major building blocks of isoprenoid compounds. Catalyzes the conversion of 4-diphosphocytidyl-2-C-methyl-D-erythritol 2-phosphate (CDP-ME2P) to 2-C-methyl-D-erythritol 2,4-cyclodiphosphate (ME-CPP) with a corresponding release of cytidine 5-monophosphate (CMP). The sequence is that of 2-C-methyl-D-erythritol 2,4-cyclodiphosphate synthase from Paraburkholderia phymatum (strain DSM 17167 / CIP 108236 / LMG 21445 / STM815) (Burkholderia phymatum).